Consider the following 224-residue polypeptide: Phosphoglycolate phosphatase (224 aa).

The Nucleophile role is filled by D11. Mg(2+) contacts are provided by D11, D13, and D177.

This sequence belongs to the HAD-like hydrolase superfamily. CbbY/CbbZ/Gph/YieH family. It depends on Mg(2+) as a cofactor.

The catalysed reaction is 2-phosphoglycolate + H2O = glycolate + phosphate. The protein operates within organic acid metabolism; glycolate biosynthesis; glycolate from 2-phosphoglycolate: step 1/1. Its function is as follows. Specifically catalyzes the dephosphorylation of 2-phosphoglycolate. Is involved in the dissimilation of the intracellular 2-phosphoglycolate formed during the DNA repair of 3'-phosphoglycolate ends, a major class of DNA lesions induced by oxidative stress. This is Phosphoglycolate phosphatase from Mannheimia succiniciproducens (strain KCTC 0769BP / MBEL55E).